The sequence spans 634 residues: Phosphatase and actin regulator 2 (634 aa).

4 disordered regions span residues 1-32, 84-344, 412-471, and 485-508; these read MDNAVDGLDKASIANSDGPTAGSQTPPFKRKG, LPDQ…PLED, PQLL…ALAS, and NRPSKKELEDKNILQRTSEEERQE. The N-myristoyl glycine moiety is linked to residue Asp2. The segment covering 13-26 has biased composition (polar residues); that stretch reads IANSDGPTAGSQTP. Phosphoserine is present on Ser16. Thr25 is subject to Phosphothreonine. One copy of the RPEL 1 repeat lies at 60–85; that stretch reads AVLERKISTRQSREELIRRGVLKELP. Basic and acidic residues-rich tracts occupy residues 108–120 and 137–147; these read ESTREENVVKSEE and EDKKENTENHS. Over residues 153 to 162 the composition is skewed to pro residues; the sequence is PALPPSAPPK. Low complexity-rich tracts occupy residues 231 to 247 and 276 to 290; these read GSKASASPSTSSTSSRP and TSHLSSDTTTSGTSD. Over residues 291 to 304 the composition is skewed to basic and acidic residues; it reads LKGEPAETRVESFK. A compositionally biased stretch (pro residues) spans 324-341; the sequence is VPPPPVAPAPSPLAPPLP. At Ser423 the chain carries Phosphoserine. Over residues 452–464 the composition is skewed to acidic residues; sequence TDDEDEDEDEDGS. RPEL repeat units follow at residues 477 to 502, 515 to 540, and 553 to 578; these read DTLAIKLGNRPSKKELEDKNILQRTS, TKLVRRLSQRPTTEELEQRNILKQKN, and RRLSRKLSLRPTVAELQARRILRFNE. The segment covering 488–508 has biased composition (basic and acidic residues); the sequence is SKKELEDKNILQRTSEEERQE. 2 positions are modified to phosphoserine: Ser522 and Ser560.

The protein belongs to the phosphatase and actin regulator family. As to quaternary structure, binds PPP1CA and actin.

It is found in the membrane. The chain is Phosphatase and actin regulator 2 (PHACTR2) from Homo sapiens (Human).